A 1025-amino-acid chain; its full sequence is Rho GTPase-activating protein Graf (1025 aa).

The region spanning 271-388 (IFTKRGYLFL…WISAMDGTEP (118 aa)) is the PH domain. A Rho-GAP domain is found at 402 to 589 (YHLDEAGFMF…ILIDNYERIF (188 aa)). Residues 824-866 (GSASGPQQHPPVQRGLHSYGQTKHYSPLMPTSTSSSNDSVCDS) are disordered. Over residues 854–866 (TSTSSSNDSVCDS) the composition is skewed to low complexity. Positions 963–1023 (TGTARVRTLY…PENYVEHLKP (61 aa)) constitute an SH3 domain.

In terms of assembly, interacts with Egfr (when ubiquitinated). In terms of tissue distribution, in the adult brain, expressed in the antennal lobe, the subesophageal ganglion and the alpha/beta neurons of the mushroom body.

It localises to the cytoplasm. The protein localises to the cytosol. The protein resides in the cytoplasmic vesicle. In terms of biological role, GTPase-activating protein for Rho family proteins. Essential component of the CLIC (clathrin-independent carrier)/GEEC (GPI-anchored protein-enriched early endocytic compartment) endocytic pathway. During hematopoiesis, inhibits Egfr-ras-MAPK signaling by promoting Spi-induced Egfr internalization through CLIC/GEEC endocytosis, thereby preventing plasmatocyte overproliferation. Essential for normal mushroom body (MB) development and consequently the formation of olfactory long-term memories. During MD development, required to stop the MB beta-lobe from crossing the brain midline, possibly acting via its role in the CLIC/GEEC endocytic pathway to down-regulate the Egfr-ras-MAPK signaling at the tip of the beta-lobes. Required during embryo cellularization for maintaining and regulating the rate of actomyosin ring constriction. During cellularization, inhibits Rho-GTP levels at the furrow canal tip in a spatiotemporal manner, thus delaying the onset of actomyosin contraction and ensuring appropriate closure of the cells at the base of nuclei after membrane extension. The polypeptide is Rho GTPase-activating protein Graf (Drosophila melanogaster (Fruit fly)).